Consider the following 194-residue polypeptide: dTTP/UTP pyrophosphatase (194 aa).

The active-site Proton acceptor is the Asp73.

The protein belongs to the Maf family. YhdE subfamily. A divalent metal cation is required as a cofactor.

It localises to the cytoplasm. The catalysed reaction is dTTP + H2O = dTMP + diphosphate + H(+). The enzyme catalyses UTP + H2O = UMP + diphosphate + H(+). Its function is as follows. Nucleoside triphosphate pyrophosphatase that hydrolyzes dTTP and UTP. May have a dual role in cell division arrest and in preventing the incorporation of modified nucleotides into cellular nucleic acids. The polypeptide is dTTP/UTP pyrophosphatase (Geotalea uraniireducens (strain Rf4) (Geobacter uraniireducens)).